The chain runs to 147 residues: DNA-directed RNA polymerase I subunit rpa14 (147 aa).

The segment at 71 to 147 (VQGPPTEELI…TQGVGEKEQS (77 aa)) is disordered. A compositionally biased stretch (low complexity) spans 74–84 (PPTEELIIPPE). Basic and acidic residues predominate over residues 87 to 111 (LETKEEESLKHAREENDDLHLDKET). A compositionally biased stretch (basic residues) spans 112 to 124 (KKRLKKEKKKAAR). The span at 125-135 (REKEEARKAKA) shows a compositional bias: basic and acidic residues.

As to quaternary structure, component of the RNA polymerase I (Pol I) complex consisting of 14 subunits. Part of a Pol I subcomplex consisting of the subunits A14 and A43. Interacts with rpa43. Post-translationally, phosphorylated.

It localises to the nucleus. The protein localises to the nucleolus. DNA-dependent RNA polymerase catalyzes the transcription of DNA into RNA using the four ribonucleoside triphosphates as substrates. Component of RNA polymerase I which synthesizes ribosomal RNA precursors. A14 seems to play a role in the stability of Pol I subunit A43 and association of rrn3 to Pol I. The chain is DNA-directed RNA polymerase I subunit rpa14 (ker1) from Schizosaccharomyces pombe (strain 972 / ATCC 24843) (Fission yeast).